A 49-amino-acid chain; its full sequence is Large ribosomal subunit protein bL33B (49 aa).

Belongs to the bacterial ribosomal protein bL33 family.

This is Large ribosomal subunit protein bL33B from Lactobacillus helveticus (strain DPC 4571).